A 162-amino-acid chain; its full sequence is Cyclic pyranopterin monophosphate synthase (162 aa).

Residues 75–77 and 115–116 contribute to the substrate site; these read MCH and ME. D130 is a catalytic residue.

This sequence belongs to the MoaC family. In terms of assembly, homohexamer; trimer of dimers.

The catalysed reaction is (8S)-3',8-cyclo-7,8-dihydroguanosine 5'-triphosphate = cyclic pyranopterin phosphate + diphosphate. It participates in cofactor biosynthesis; molybdopterin biosynthesis. Functionally, catalyzes the conversion of (8S)-3',8-cyclo-7,8-dihydroguanosine 5'-triphosphate to cyclic pyranopterin monophosphate (cPMP). This Geobacillus thermodenitrificans (strain NG80-2) protein is Cyclic pyranopterin monophosphate synthase.